The primary structure comprises 358 residues: Low-specificity L-threonine aldolase 1 (358 aa).

N6-(pyridoxal phosphate)lysine is present on Lys-207.

The protein belongs to the threonine aldolase family. The cofactor is pyridoxal 5'-phosphate. In terms of tissue distribution, expressed in root tips, seedlings, carpels and seeds.

The catalysed reaction is L-threonine = acetaldehyde + glycine. It carries out the reaction L-allo-threonine = acetaldehyde + glycine. The protein operates within amino-acid degradation; L-threonine degradation via aldolase pathway; acetaldehyde and glycine from L-threonine: step 1/1. In terms of biological role, threonine aldolase involved in threonine degradation to glycine. May play a role in the removal of L-allo-threonine. The polypeptide is Low-specificity L-threonine aldolase 1 (Arabidopsis thaliana (Mouse-ear cress)).